A 302-amino-acid polypeptide reads, in one-letter code: tRNA dimethylallyltransferase (302 aa).

Residue 9–16 (GPTAAGKS) coordinates ATP. 11–16 (TAAGKS) serves as a coordination point for substrate. An interaction with substrate tRNA region spans residues 34-37 (DSRQ).

It belongs to the IPP transferase family. Monomer. Requires Mg(2+) as cofactor.

It carries out the reaction adenosine(37) in tRNA + dimethylallyl diphosphate = N(6)-dimethylallyladenosine(37) in tRNA + diphosphate. Its function is as follows. Catalyzes the transfer of a dimethylallyl group onto the adenine at position 37 in tRNAs that read codons beginning with uridine, leading to the formation of N6-(dimethylallyl)adenosine (i(6)A). This is tRNA dimethylallyltransferase from Gloeobacter violaceus (strain ATCC 29082 / PCC 7421).